The primary structure comprises 283 residues: Pantothenate synthetase (283 aa).

Met-30–His-37 contributes to the ATP binding site. His-37 (proton donor) is an active-site residue. Residue Gln-61 coordinates (R)-pantoate. Gln-61 provides a ligand contact to beta-alanine. Gly-149–Asp-152 contacts ATP. Gln-155 serves as a coordination point for (R)-pantoate. Residues Val-178 and Leu-186 to Arg-189 each bind ATP.

It belongs to the pantothenate synthetase family. In terms of assembly, homodimer.

The protein localises to the cytoplasm. It catalyses the reaction (R)-pantoate + beta-alanine + ATP = (R)-pantothenate + AMP + diphosphate + H(+). It participates in cofactor biosynthesis; (R)-pantothenate biosynthesis; (R)-pantothenate from (R)-pantoate and beta-alanine: step 1/1. Functionally, catalyzes the condensation of pantoate with beta-alanine in an ATP-dependent reaction via a pantoyl-adenylate intermediate. The chain is Pantothenate synthetase from Hydrogenovibrio crunogenus (strain DSM 25203 / XCL-2) (Thiomicrospira crunogena).